A 126-amino-acid chain; its full sequence is MYPHLVSLGISEPEKIERYSLRQEAHKDILKIYFSKQKGELFAKSVKFKYPRQVKNVLVDSGSHRYKETTEINRNLTLIIDELNKITRPEKETPTDVKKKILKDLRHLEKVVASKIEEIEKDLEKL.

This sequence belongs to the UPF0325 family.

This chain is UPF0325 protein VFMJ11_2099, found in Aliivibrio fischeri (strain MJ11) (Vibrio fischeri).